The chain runs to 127 residues: Glycine cleavage system H protein (127 aa).

A Lipoyl-binding domain is found at 22–104 (AVVIGITHFA…YEGAWMVKVE (83 aa)). N6-lipoyllysine is present on Lys63.

Belongs to the GcvH family. As to quaternary structure, the glycine cleavage system is composed of four proteins: P, T, L and H. The cofactor is (R)-lipoate.

Its function is as follows. The glycine cleavage system catalyzes the degradation of glycine. The H protein shuttles the methylamine group of glycine from the P protein to the T protein. In terms of biological role, is also involved in protein lipoylation via its role as an octanoyl/lipoyl carrier protein intermediate. This chain is Glycine cleavage system H protein, found in Bacillus mycoides (strain KBAB4) (Bacillus weihenstephanensis).